Reading from the N-terminus, the 148-residue chain is Large ribosomal subunit protein bL9 (148 aa).

The protein belongs to the bacterial ribosomal protein bL9 family.

Functionally, binds to the 23S rRNA. The polypeptide is Large ribosomal subunit protein bL9 (Stutzerimonas stutzeri (strain A1501) (Pseudomonas stutzeri)).